Reading from the N-terminus, the 439-residue chain is COBRA-like protein 7 (439 aa).

Residues 1–22 form the signal peptide; it reads MDVDQLILFVFVCCLSSRFADA. 6 N-linked (GlcNAc...) asparagine glycosylation sites follow: Asn-138, Asn-181, Asn-186, Asn-232, Asn-312, and Asn-346. Asn-412 is lipidated: GPI-anchor amidated asparagine. Residues 413-439 constitute a propeptide, removed in mature form; that stretch reads GGPDSRVSAAQLIASSCLLLPFIFLIM.

Belongs to the COBRA family.

The protein resides in the cell membrane. Functionally, involved in determining the orientation of cell expansion, probably by playing an important role in cellulose deposition. May act by recruiting cellulose synthesizing complexes to discrete positions on the cell surface. This chain is COBRA-like protein 7 (BC1LP1), found in Oryza sativa subsp. japonica (Rice).